We begin with the raw amino-acid sequence, 718 residues long: Peroxisomal bifunctional enzyme (718 aa).

The tract at residues 2–280 (ARYELVKRSV…FAQRTAEKWT (279 aa)) is enoyl-CoA hydratase / isomerase. Glycine 100 is a binding site for substrate. Residues 281–567 (LPSGAQWNNS…DMVCQQGRFG (287 aa)) are 3-hydroxyacyl-CoA dehydrogenase. Residues 716 to 718 (SHL) carry the Microbody targeting signal motif.

This sequence in the N-terminal section; belongs to the enoyl-CoA hydratase/isomerase family. In the C-terminal section; belongs to the 3-hydroxyacyl-CoA dehydrogenase family. As to quaternary structure, monomer.

The protein localises to the peroxisome. The enzyme catalyses a (3S)-3-hydroxyacyl-CoA = a (2E)-enoyl-CoA + H2O. It carries out the reaction a 4-saturated-(3S)-3-hydroxyacyl-CoA = a (3E)-enoyl-CoA + H2O. The catalysed reaction is a (3Z)-enoyl-CoA = a 4-saturated (2E)-enoyl-CoA. It catalyses the reaction a (3E)-enoyl-CoA = a 4-saturated (2E)-enoyl-CoA. The enzyme catalyses a (3S)-3-hydroxyacyl-CoA + NAD(+) = a 3-oxoacyl-CoA + NADH + H(+). It carries out the reaction (2S,3S)-3-hydroxy-2-methylbutanoyl-CoA = (2E)-2-methylbut-2-enoyl-CoA + H2O. The catalysed reaction is (3S)-hydroxyhexadecanoyl-CoA + NAD(+) = 3-oxohexadecanoyl-CoA + NADH + H(+). It catalyses the reaction (3S)-hydroxyhexadecanoyl-CoA = (2E)-hexadecenoyl-CoA + H2O. The enzyme catalyses (2E)-hexadecenedioyl-CoA + H2O = (3S)-hydroxyhexadecanedioyl-CoA. It carries out the reaction (3S)-hydroxyhexadecanedioyl-CoA + NAD(+) = 3-oxohexadecanedioyl-CoA + NADH + H(+). The catalysed reaction is (3E,5Z)-tetradecadienoyl-CoA = (2E,5Z)-tetradecadienoyl-CoA. It catalyses the reaction (3E,5Z)-octadienoyl-CoA = (2E,5Z)-octadienoyl-CoA. The enzyme catalyses (3S)-hydroxydecanoyl-CoA + NAD(+) = 3-oxodecanoyl-CoA + NADH + H(+). It carries out the reaction (3E)-decenoyl-CoA = (2E)-decenoyl-CoA. The catalysed reaction is (3Z)-hexenoyl-CoA = (2E)-hexenoyl-CoA. It catalyses the reaction (3E)-hexenoyl-CoA = (2E)-hexenoyl-CoA. The enzyme catalyses (3S)-hydroxydecanoyl-CoA = (2E)-decenoyl-CoA + H2O. It carries out the reaction (3S)-hydroxyhexanoyl-CoA = (2E)-hexenoyl-CoA + H2O. The protein operates within lipid metabolism; fatty acid beta-oxidation. In terms of biological role, peroxisomal trifunctional enzyme possessing 2-enoyl-CoA hydratase, 3-hydroxyacyl-CoA dehydrogenase, and delta 3, delta 2-enoyl-CoA isomerase activities. Catalyzes two of the four reactions of the long straight chain fatty acids peroxisomal beta-oxidation pathway. Can also use branched-chain fatty acids such as 2-methyl-2E-butenoyl-CoA as a substrate, which is hydrated into (2S,3S)-3-hydroxy-2-methylbutanoyl-CoA. Optimal isomerase for 2,5 double bonds into 3,5 form isomerization in a range of enoyl-CoA species. Also able to isomerize both 3-cis and 3-trans double bonds into the 2-trans form in a range of enoyl-CoA species. Regulates the amount of medium-chain dicarboxylic fatty acids which are essential regulators of all fatty acid oxidation pathways. Also involved in the degradation of long-chain dicarboxylic acids through peroxisomal beta-oxidation. The sequence is that of Peroxisomal bifunctional enzyme (ehhadh) from Danio rerio (Zebrafish).